The primary structure comprises 404 residues: CCA-adding enzyme (404 aa).

Positions 27 and 30 each coordinate ATP. Residues Gly27 and Arg30 each contribute to the CTP site. 2 residues coordinate Mg(2+): Asp40 and Asp42. 5 residues coordinate ATP: Arg111, Asp154, Arg157, Arg160, and Arg163. Residues Arg111, Asp154, Arg157, Arg160, and Arg163 each coordinate CTP.

This sequence belongs to the tRNA nucleotidyltransferase/poly(A) polymerase family. Bacterial CCA-adding enzyme type 3 subfamily. As to quaternary structure, homodimer. Requires Mg(2+) as cofactor.

It carries out the reaction a tRNA precursor + 2 CTP + ATP = a tRNA with a 3' CCA end + 3 diphosphate. It catalyses the reaction a tRNA with a 3' CCA end + 2 CTP + ATP = a tRNA with a 3' CCACCA end + 3 diphosphate. Catalyzes the addition and repair of the essential 3'-terminal CCA sequence in tRNAs without using a nucleic acid template. Adds these three nucleotides in the order of C, C, and A to the tRNA nucleotide-73, using CTP and ATP as substrates and producing inorganic pyrophosphate. tRNA 3'-terminal CCA addition is required both for tRNA processing and repair. Also involved in tRNA surveillance by mediating tandem CCA addition to generate a CCACCA at the 3' terminus of unstable tRNAs. While stable tRNAs receive only 3'-terminal CCA, unstable tRNAs are marked with CCACCA and rapidly degraded. The structural flexibility of RNA controls the choice between CCA versus CCACCA addition: following the first CCA addition cycle, nucleotide-binding to the active site triggers a clockwise screw motion, producing torque on the RNA. This ejects stable RNAs, whereas unstable RNAs are refolded while bound to the enzyme and subjected to a second CCA catalytic cycle. The protein is CCA-adding enzyme of Geobacillus stearothermophilus (Bacillus stearothermophilus).